The chain runs to 210 residues: Large ribosomal subunit protein uL4 (210 aa).

It belongs to the universal ribosomal protein uL4 family. As to quaternary structure, part of the 50S ribosomal subunit.

In terms of biological role, one of the primary rRNA binding proteins, this protein initially binds near the 5'-end of the 23S rRNA. It is important during the early stages of 50S assembly. It makes multiple contacts with different domains of the 23S rRNA in the assembled 50S subunit and ribosome. Functionally, forms part of the polypeptide exit tunnel. This chain is Large ribosomal subunit protein uL4, found in Orientia tsutsugamushi (strain Boryong) (Rickettsia tsutsugamushi).